The chain runs to 564 residues: R-linalool synthase (564 aa).

Residues Asp-320, Asp-324, Asp-464, Thr-468, and Glu-472 each contribute to the Mg(2+) site. A DDXXD motif motif is present at residues 320–324; it reads DDVYD.

This sequence belongs to the terpene synthase family. The cofactor is Mg(2+). It depends on Mn(2+) as a cofactor.

It catalyses the reaction (2E)-geranyl diphosphate + H2O = (R)-linalool + diphosphate. Specifically catalyzes production of (R)-(-)-linalool, the main component of lavender essential oil. This Lavandula angustifolia (Lavender) protein is R-linalool synthase.